Consider the following 462-residue polypeptide: Transcription initiation factor TFIID subunit 7-like (462 aa).

Disordered regions lie at residues 1–97 (MECP…VPDE) and 327–366 (DSRSNNDDDEDEDDEDEDEDEDEDEDEDKEEEEEDCSEEY). Low complexity-rich tracts occupy residues 16–30 (STPTVSTSEVTSQQE) and 66–77 (DADSSAQAAAQA). The segment covering 333–365 (DDDEDEDDEDEDEDEDEDEDEDKEEEEEDCSEE) has biased composition (acidic residues). Residues 342–462 (DEDEDEDEDE…QEQLQRFLKK (121 aa)) adopt a coiled-coil conformation.

It belongs to the TAF7 family. TFIID is composed of TATA binding protein (TBP) and a number of TBP-associated factors (TAFs). TAF7L may replace TAF7 in a spermatogenesis-specific form of TFIID. Interacts with TBP; the interaction occurs in a sub-population of cells (pachytene and haploid round spermatids) and is developmentally regulated through differential intracellular localization of the two proteins. Interacts with TAF1. As to expression, testis-specific.

The protein localises to the nucleus. It is found in the cytoplasm. In terms of biological role, probably functions as a spermatogenesis-specific component of the DNA-binding general transcription factor complex TFIID, a multimeric protein complex that plays a central role in mediating promoter responses to various activators and repressors. May play a role in spermatogenesis. This chain is Transcription initiation factor TFIID subunit 7-like (TAF7L), found in Homo sapiens (Human).